Consider the following 339-residue polypeptide: MNKILLLILLESIVFLSCSGKGSLGSEIPKVSLIIDGTFDDKSFNESALNGVKKVKEEFKIELVLKESSSNSYLSDLEGLKDAGSDLIWLIGYRFSDVAKVAALQNPDMKYAIIDPIYSNDPIPANLVGMTFRAQEGAFLTGYIAAKLSKTGKIGFLGGIEGEIVDAFRYGYEAGAKYANKDIKISTQYIGSFADLEAGRSVATRMYSDEIDIIHHAAGLGGIGAIEVAKELGSGHYIIGVDEDQAYLAPDNVITSTTKDVGRALNIFTSNHLKTNTFEGGKLINYGLKEGVVGFVRNPKMISFELEKEIDNLSSKIINKEIIVPSNKESYEKFLKEFI.

Residues 1–17 (MNKILLLILLESIVFLS) form the signal peptide. The N-palmitoyl cysteine moiety is linked to residue Cys18. Residue Cys18 is the site of S-diacylglycerol cysteine attachment.

This sequence belongs to the BMP lipoprotein family. In terms of assembly, monomer.

Its subcellular location is the cell inner membrane. Immunogenic protein. May be part of an ABC-type nucleoside uptake system involved in the purine salvage pathway. The chain is Basic membrane protein A (bmpA) from Borreliella burgdorferi (strain ATCC 35210 / DSM 4680 / CIP 102532 / B31) (Borrelia burgdorferi).